Consider the following 386-residue polypeptide: Chaperone protein DnaJ (386 aa).

A J domain is found at N4 to G68. Composition is skewed to basic and acidic residues over residues K22–V35 and E43–G79. The tract at residues K22–D132 is disordered. Composition is skewed to gly residues over residues A80–G104 and F113–N125. The segment at G147–E229 adopts a CR-type zinc-finger fold. Zn(2+) is bound by residues C160, C163, C177, C180, C203, C206, C217, and C220. 4 CXXCXGXG motif repeats span residues C160–G167, C177–G184, C203–G210, and C217–G224.

The protein belongs to the DnaJ family. In terms of assembly, homodimer. It depends on Zn(2+) as a cofactor.

The protein resides in the cytoplasm. Functionally, participates actively in the response to hyperosmotic and heat shock by preventing the aggregation of stress-denatured proteins and by disaggregating proteins, also in an autonomous, DnaK-independent fashion. Unfolded proteins bind initially to DnaJ; upon interaction with the DnaJ-bound protein, DnaK hydrolyzes its bound ATP, resulting in the formation of a stable complex. GrpE releases ADP from DnaK; ATP binding to DnaK triggers the release of the substrate protein, thus completing the reaction cycle. Several rounds of ATP-dependent interactions between DnaJ, DnaK and GrpE are required for fully efficient folding. Also involved, together with DnaK and GrpE, in the DNA replication of plasmids through activation of initiation proteins. The polypeptide is Chaperone protein DnaJ (Halorubrum lacusprofundi (strain ATCC 49239 / DSM 5036 / JCM 8891 / ACAM 34)).